Consider the following 87-residue polypeptide: RNA-binding protein Hfq (87 aa).

In terms of domain architecture, Sm spans 9–68 (DPFLNALRRERIPVSIFLVNGIKLQGKIQSFDQFVILLENTVNQMVYKHAISTVVPARAV).

It belongs to the Hfq family. In terms of assembly, homohexamer.

Its function is as follows. RNA chaperone that binds small regulatory RNA (sRNAs) and mRNAs to facilitate mRNA translational regulation in response to envelope stress, environmental stress and changes in metabolite concentrations. Also binds with high specificity to tRNAs. The chain is RNA-binding protein Hfq from Pseudoalteromonas translucida (strain TAC 125).